The chain runs to 135 residues: NAD(P)H-quinone oxidoreductase subunit 3 (135 aa).

3 consecutive transmembrane segments (helical) span residues 15–35, 79–99, and 104–124; these read IVFF…SSLV, MFAL…PWAV, and LGLL…VALV.

Belongs to the complex I subunit 3 family. In terms of assembly, NDH-1 can be composed of about 15 different subunits; different subcomplexes with different compositions have been identified which probably have different functions.

It localises to the cellular thylakoid membrane. It catalyses the reaction a plastoquinone + NADH + (n+1) H(+)(in) = a plastoquinol + NAD(+) + n H(+)(out). It carries out the reaction a plastoquinone + NADPH + (n+1) H(+)(in) = a plastoquinol + NADP(+) + n H(+)(out). In terms of biological role, NDH-1 shuttles electrons from an unknown electron donor, via FMN and iron-sulfur (Fe-S) centers, to quinones in the respiratory and/or the photosynthetic chain. The immediate electron acceptor for the enzyme in this species is believed to be plastoquinone. Couples the redox reaction to proton translocation, and thus conserves the redox energy in a proton gradient. Cyanobacterial NDH-1 also plays a role in inorganic carbon-concentration. The polypeptide is NAD(P)H-quinone oxidoreductase subunit 3 (Trichodesmium erythraeum (strain IMS101)).